The primary structure comprises 522 residues: Major facilitator-type transporter sorT (522 aa).

The interval 1–21 is disordered; sequence MSHTEPKAPVNTGEVENGHLY. The next 12 helical transmembrane spans lie at 52 to 72, 89 to 109, 121 to 141, 143 to 163, 183 to 203, 211 to 231, 280 to 300, 324 to 344, 366 to 386, 395 to 415, 427 to 447, and 457 to 477; these read WFIAAIATLSVFAVTFTSSAY, VFIVGLSLFVLGFAIGPAVWA, QILWIITHIAMVAFLGGSAGS, NVATLLILRFFAGTFGGSPLV, TIYCVAPFLGPILGPIVGGFV, WVQGVCVIFIGVVGILGIVFI, WIFLFLEPIVLIASVYMAIIY, IGGLAFLGIAVGIIFGLVYAI, LPPAIVGGVALPIGMFAFAWT, VSIILSAPFGFGCVLVILPIM, ASVLAAAAIFRSVVGAVFPLF, and IHWASSIPAFLTLLCMPFPLI.

Belongs to the major facilitator superfamily. Sugar transporter (TC 2.A.1.1) family.

The protein resides in the membrane. Functionally, major facilitator-type transporter; part of the gene cluster that mediates the biosynthesis of sorbicillinoids, a diverse group of yellow secondary metabolites that restrict growth of competing pathogenic fungi but not of bacteria. This chain is Major facilitator-type transporter sorT, found in Penicillium rubens (strain ATCC 28089 / DSM 1075 / NRRL 1951 / Wisconsin 54-1255) (Penicillium chrysogenum).